Consider the following 180-residue polypeptide: Adenine phosphoribosyltransferase (180 aa).

This sequence belongs to the purine/pyrimidine phosphoribosyltransferase family. As to quaternary structure, homodimer.

The protein localises to the cytoplasm. The enzyme catalyses AMP + diphosphate = 5-phospho-alpha-D-ribose 1-diphosphate + adenine. It participates in purine metabolism; AMP biosynthesis via salvage pathway; AMP from adenine: step 1/1. Functionally, catalyzes a salvage reaction resulting in the formation of AMP, that is energically less costly than de novo synthesis. The polypeptide is Adenine phosphoribosyltransferase (Sinorhizobium medicae (strain WSM419) (Ensifer medicae)).